Reading from the N-terminus, the 236-residue chain is Peptidase E (236 aa).

Catalysis depends on charge relay system residues Ser122, Asp137, and His159.

It belongs to the peptidase S51 family.

The protein resides in the cytoplasm. It catalyses the reaction Dipeptidase E catalyzes the hydrolysis of dipeptides Asp-|-Xaa. It does not act on peptides with N-terminal Glu, Asn or Gln, nor does it cleave isoaspartyl peptides.. Hydrolyzes dipeptides containing N-terminal aspartate residues. May play a role in allowing the cell to use peptide aspartate to spare carbon otherwise required for the synthesis of the aspartate family of amino acids. The chain is Peptidase E from Shewanella sp. (strain ANA-3).